The sequence spans 426 residues: Enolase (426 aa).

Glutamine 163 contributes to the (2R)-2-phosphoglycerate binding site. The Proton donor role is filled by glutamate 205. Residues aspartate 242, glutamate 286, and aspartate 313 each coordinate Mg(2+). (2R)-2-phosphoglycerate is bound by residues lysine 338, arginine 367, serine 368, and lysine 389. The active-site Proton acceptor is lysine 338.

It belongs to the enolase family. The cofactor is Mg(2+).

Its subcellular location is the cytoplasm. The protein localises to the secreted. It localises to the cell surface. It catalyses the reaction (2R)-2-phosphoglycerate = phosphoenolpyruvate + H2O. The protein operates within carbohydrate degradation; glycolysis; pyruvate from D-glyceraldehyde 3-phosphate: step 4/5. In terms of biological role, catalyzes the reversible conversion of 2-phosphoglycerate (2-PG) into phosphoenolpyruvate (PEP). It is essential for the degradation of carbohydrates via glycolysis. The sequence is that of Enolase from Helicobacter pylori (strain J99 / ATCC 700824) (Campylobacter pylori J99).